Reading from the N-terminus, the 305-residue chain is Elongation factor Ts, mitochondrial (305 aa).

It belongs to the EF-Ts family.

It localises to the mitochondrion. Functionally, associates with the EF-Tu.GDP complex and induces the exchange of GDP to GTP. It remains bound to the aminoacyl-tRNA.EF-Tu.GTP complex up to the GTP hydrolysis stage on the ribosome. This is Elongation factor Ts, mitochondrial (tsfm) from Danio rerio (Zebrafish).